The following is a 166-amino-acid chain: Xanthine-guanine phosphoribosyltransferase (166 aa).

Residues 42–43 (RG) and 99–107 (DDLTDTGKT) contribute to the 5-phospho-alpha-D-ribose 1-diphosphate site. Asp100 is a Mg(2+) binding site. 2 residues coordinate guanine: Asp103 and Ile146. Xanthine contacts are provided by Asp103 and Ile146. Residues 103-107 (DTGKT) and 145-146 (WI) each bind GMP.

The protein belongs to the purine/pyrimidine phosphoribosyltransferase family. XGPT subfamily. As to quaternary structure, homotetramer. Mg(2+) serves as cofactor.

It is found in the cell inner membrane. The catalysed reaction is GMP + diphosphate = guanine + 5-phospho-alpha-D-ribose 1-diphosphate. It catalyses the reaction XMP + diphosphate = xanthine + 5-phospho-alpha-D-ribose 1-diphosphate. It carries out the reaction IMP + diphosphate = hypoxanthine + 5-phospho-alpha-D-ribose 1-diphosphate. It functions in the pathway purine metabolism; GMP biosynthesis via salvage pathway; GMP from guanine: step 1/1. Its pathway is purine metabolism; XMP biosynthesis via salvage pathway; XMP from xanthine: step 1/1. In terms of biological role, purine salvage pathway enzyme that catalyzes the transfer of the ribosyl-5-phosphate group from 5-phospho-alpha-D-ribose 1-diphosphate (PRPP) to the N9 position of the 6-oxopurines guanine and xanthine to form the corresponding ribonucleotides GMP (guanosine 5'-monophosphate) and XMP (xanthosine 5'-monophosphate), with the release of PPi. To a lesser extent, also acts on hypoxanthine. This is Xanthine-guanine phosphoribosyltransferase from Mesorhizobium japonicum (strain LMG 29417 / CECT 9101 / MAFF 303099) (Mesorhizobium loti (strain MAFF 303099)).